We begin with the raw amino-acid sequence, 188 residues long: UPF0301 protein Smal_0940 (188 aa).

The protein belongs to the UPF0301 (AlgH) family.

The polypeptide is UPF0301 protein Smal_0940 (Stenotrophomonas maltophilia (strain R551-3)).